Consider the following 138-residue polypeptide: Beta-galactosidase (138 aa).

It belongs to the glycosyl hydrolase 2 family.

It carries out the reaction Hydrolysis of terminal non-reducing beta-D-galactose residues in beta-D-galactosides.. The sequence is that of Beta-galactosidase (lacZ) from Rhizobium radiobacter (Agrobacterium tumefaciens).